The primary structure comprises 276 residues: Src-like-adapter (276 aa).

G2 is lipidated: N-myristoyl glycine. Residues 22–82 (LDSDFLAVLS…PGICVARVYH (61 aa)) enclose the SH3 domain. The region spanning 84–175 (WLFEGLGRDK…GLCCVLTTPC (92 aa)) is the SH2 domain. Residues 212-276 (EGTENPLGVD…FFSSPPYFED (65 aa)) form an SLA C-terminal region. S253 is subject to Phosphoserine. Y273 is modified (phosphotyrosine).

As to quaternary structure, interacts with EPHA2, VAV1, LCP2 and PDGFRB. Homodimer. Homodimerization and interaction with phosphorylated CBL occurs via its C-terminal domain. Interacts with phosphorylated proteins ZAP70, CD3Z, SYK and LAT via its SH2 domain. As to expression, expressed in lung and fetal brain. Weakly expressed in heart, adult brain, placenta, liver, skeletal muscle, kidney and pancreas.

The protein resides in the cytoplasm. Its subcellular location is the endosome. In terms of biological role, adapter protein, which negatively regulates T-cell receptor (TCR) signaling. Inhibits T-cell antigen-receptor induced activation of nuclear factor of activated T-cells. Involved in the negative regulation of positive selection and mitosis of T-cells. May act by linking signaling proteins such as ZAP70 with CBL, leading to a CBL dependent degradation of signaling proteins. This chain is Src-like-adapter (SLA), found in Homo sapiens (Human).